A 629-amino-acid polypeptide reads, in one-letter code: MEVKGQLISSPTFTAPAALFGEAAPLVKSDRLRGLLDRQRALQEALSVKLQELRKVCLQEAELTGQLPPECPLEPGERPQLVRRRPPAARAYPPPHPNPAHHSLCPAEELALEALEREVSVQQQIAAAARRLALAPDLNGEQRRRRRQVQVDALRRLHELEEQLRDFRARLGLPVLQPLPLSAGALVNAQGVCLGTRLAQLSQEDVVLHSESSSLSESGASHDNEEPHSCFPLTERPSPPKAWDQFRAVSGGSPERRAPWKPPPSDIYGDLKSRRNSVASPTSPTRSLPRSASSFEGRSVPATPVLTRGSGPRLCKPEGLHSRQWSGSQDSQMGFPRPDPASDRASLFAARTRRSNSSEALLVDRAAAGGAGSPPAPLAPPAAGPPVCKSSEVLYERPQPVPSFSSRTTGPPDPPRAARPSSAAPASRGAPRLPTVCGDFLLDYPLDRGLPRGSGGAGWGELLPAPEVPGPLSRRDGLLAMLPGPPPIYAADGSSPLLRSKDPNTRAIRSKPSGLPPEAVEGLEVHPNPLLWMPPPTRIPPAGERGGHKNLALEGLRDWYIRNSGLAVGPQRRPMLPHVGPTHTPFLHARCYEVGQSLYGPPSQAPLPHSRSFTAPPVSGRYGGAFTDG.

The segment at 31 to 70 (RLRGLLDRQRALQEALSVKLQELRKVCLQEAELTGQLPPE) is involved in CYTH2-binding. A coiled-coil region spans residues 109–173 (ELALEALERE…LRDFRARLGL (65 aa)). 2 stretches are compositionally biased toward low complexity: residues 209–219 (HSESSSLSESG) and 279–294 (ASPTSPTRSLPRSASS). Residues 209-356 (HSESSSLSES…LFAARTRRSN (148 aa)) form a disordered region. Over residues 323 to 332 (RQWSGSQDSQ) the composition is skewed to polar residues. Phosphoserine occurs at positions 355 and 357. 2 disordered regions span residues 399–432 (QPVPSFSSRTTGPPDPPRAARPSSAAPASRGAPR) and 602–629 (PSQAPLPHSRSFTAPPVSGRYGGAFTDG). Residues 418 to 432 (ARPSSAAPASRGAPR) are compositionally biased toward low complexity. At Arg-432 the chain carries Omega-N-methylarginine.

In terms of assembly, interacts with NIN and CEP170; leading to recruit them to centrosomes. Interacts with CYTH2; this interaction is direct and stabilizes CCDC120, possibly by preventing ubiquitination. Post-translationally, ubiquitinated; interaction with CYTH2 may prevent ubiquitination.

It localises to the cytoplasm. The protein localises to the cytoskeleton. It is found in the microtubule organizing center. The protein resides in the centrosome. Its subcellular location is the centriole. It localises to the cell projection. The protein localises to the neuron projection. It is found in the growth cone. The protein resides in the endosome. In terms of biological role, centriolar protein required for centriole subdistal appendage assembly and microtubule anchoring in interphase cells. Together with CCDC68, cooperate with subdistal appendage components ODF2, NIN and CEP170 for hierarchical subdistal appendage assembly. Recruits NIN and CEP170 to centrosomes. Also required for neurite growth. Localizes CYTH2 to vesicles to allow its transport along neurites, and subsequent ARF6 activation and neurite growth. The protein is Coiled-coil domain-containing protein 120 of Mus musculus (Mouse).